The primary structure comprises 919 residues: Probable glucan 1,3-alpha-glucosidase (919 aa).

Residues M1 to A28 form the signal peptide. D510 acts as the Nucleophile in catalysis. E513 is a catalytic residue. The active-site Proton donor is the D586. N-linked (GlcNAc...) asparagine glycosylation occurs at N802.

Belongs to the glycosyl hydrolase 31 family. In terms of assembly, heterodimer of a catalytic alpha subunit and a beta subunit.

It is found in the endoplasmic reticulum. The catalysed reaction is N(4)-(alpha-D-Glc-(1-&gt;3)-alpha-D-Man-(1-&gt;2)-alpha-D-Man-(1-&gt;2)-alpha-D-Man-(1-&gt;3)-[alpha-D-Man-(1-&gt;2)-alpha-D-Man-(1-&gt;3)-[alpha-D-Man-(1-&gt;2)-alpha-D-Man-(1-&gt;6)]-alpha-D-Man-(1-&gt;6)]-beta-D-Man-(1-&gt;4)-beta-D-GlcNAc-(1-&gt;4)-beta-D-GlcNAc)-L-asparaginyl-[protein] + H2O = N(4)-(alpha-D-Man-(1-&gt;2)-alpha-D-Man-(1-&gt;2)-alpha-D-Man-(1-&gt;3)-[alpha-D-Man-(1-&gt;2)-alpha-D-Man-(1-&gt;3)-[alpha-D-Man-(1-&gt;2)-alpha-D-Man-(1-&gt;6)]-alpha-D-Man-(1-&gt;6)]-beta-D-Man-(1-&gt;4)-beta-D-GlcNAc-(1-&gt;4)-beta-D-GlcNAc)-L-asparaginyl-[protein] (N-glucan mannose isomer 9A1,2,3B1,2,3) + beta-D-glucose. The enzyme catalyses N(4)-(alpha-D-Glc-(1-&gt;3)-alpha-D-Glc-(1-&gt;3)-alpha-D-Man-(1-&gt;2)-alpha-D-Man-(1-&gt;2)-alpha-D-Man-(1-&gt;3)-[alpha-D-Man-(1-&gt;2)-alpha-D-Man-(1-&gt;3)-[alpha-D-Man-(1-&gt;2)-alpha-D-Man-(1-&gt;6)]-alpha-D-Man-(1-&gt;6)]-beta-D-Man-(1-&gt;4)-beta-D-GlcNAc-(1-&gt;4)-beta-D-GlcNAc)-L-asparaginyl-[protein] + H2O = N(4)-(alpha-D-Glc-(1-&gt;3)-alpha-D-Man-(1-&gt;2)-alpha-D-Man-(1-&gt;2)-alpha-D-Man-(1-&gt;3)-[alpha-D-Man-(1-&gt;2)-alpha-D-Man-(1-&gt;3)-[alpha-D-Man-(1-&gt;2)-alpha-D-Man-(1-&gt;6)]-alpha-D-Man-(1-&gt;6)]-beta-D-Man-(1-&gt;4)-beta-D-GlcNAc-(1-&gt;4)-beta-D-GlcNAc)-L-asparaginyl-[protein] + beta-D-glucose. The protein operates within glycan metabolism; N-glycan metabolism. Cleaves sequentially the 2 innermost alpha-1,3-linked glucose residues from the Glc(2)Man(9)GlcNAc(2) oligosaccharide precursor of immature glycoproteins. May be required for defense response elicited by pathogen-associated molecular patterns (PAMPs). The protein is Probable glucan 1,3-alpha-glucosidase of Oryza sativa subsp. japonica (Rice).